Consider the following 354-residue polypeptide: Uroporphyrinogen decarboxylase (354 aa).

Substrate contacts are provided by residues 27 to 31 (RQAGR), Asp77, Tyr154, Thr209, and His327.

It belongs to the uroporphyrinogen decarboxylase family. As to quaternary structure, homodimer.

The protein resides in the cytoplasm. The enzyme catalyses uroporphyrinogen III + 4 H(+) = coproporphyrinogen III + 4 CO2. It functions in the pathway porphyrin-containing compound metabolism; protoporphyrin-IX biosynthesis; coproporphyrinogen-III from 5-aminolevulinate: step 4/4. Catalyzes the decarboxylation of four acetate groups of uroporphyrinogen-III to yield coproporphyrinogen-III. This Pectobacterium carotovorum subsp. carotovorum (strain PC1) protein is Uroporphyrinogen decarboxylase.